We begin with the raw amino-acid sequence, 153 residues long: DNA gyrase inhibitor (153 aa).

The protein belongs to the DNA gyrase inhibitor family. As to quaternary structure, interacts with DNA gyrase.

The protein localises to the cytoplasm. Its function is as follows. Inhibits the supercoiling activity of DNA gyrase. Acts by inhibiting DNA gyrase at an early step, prior to (or at the step of) binding of DNA by the gyrase. It protects cells against toxins that target DNA gyrase, by inhibiting activity of these toxins and reducing the formation of lethal double-strand breaks in the cell. This is DNA gyrase inhibitor from Pantoea sp. (strain At-9b).